A 375-amino-acid polypeptide reads, in one-letter code: Protein GOLM2 (375 aa).

The Cytoplasmic portion of the chain corresponds to Met-1–Arg-12. Residues Leu-13–Trp-33 traverse the membrane as a helical; Signal-anchor for type II membrane protein segment. The stretch at Asn-34 to Gln-198 forms a coiled coil. Topologically, residues Asn-34 to Leu-375 are lumenal. Disordered regions lie at residues Leu-81–Val-102, Ala-193–Asn-327, and Arg-342–Leu-375. 2 stretches are compositionally biased toward basic and acidic residues: residues Ala-193–Glu-204 and Lys-350–Leu-375.

It belongs to the GOLM family.

The protein resides in the membrane. The chain is Protein GOLM2 (GOLM2) from Gallus gallus (Chicken).